Here is a 214-residue protein sequence, read N- to C-terminus: 3-isopropylmalate dehydratase small subunit (214 aa).

The protein belongs to the LeuD family. LeuD type 1 subfamily. As to quaternary structure, heterodimer of LeuC and LeuD.

It catalyses the reaction (2R,3S)-3-isopropylmalate = (2S)-2-isopropylmalate. Its pathway is amino-acid biosynthesis; L-leucine biosynthesis; L-leucine from 3-methyl-2-oxobutanoate: step 2/4. Catalyzes the isomerization between 2-isopropylmalate and 3-isopropylmalate, via the formation of 2-isopropylmaleate. This is 3-isopropylmalate dehydratase small subunit from Methylobacillus flagellatus (strain ATCC 51484 / DSM 6875 / VKM B-1610 / KT).